The sequence spans 99 residues: Integration host factor subunit alpha (99 aa).

Belongs to the bacterial histone-like protein family. Heterodimer of an alpha and a beta chain.

Its function is as follows. This protein is one of the two subunits of integration host factor, a specific DNA-binding protein that functions in genetic recombination as well as in transcriptional and translational control. This Psychrobacter arcticus (strain DSM 17307 / VKM B-2377 / 273-4) protein is Integration host factor subunit alpha.